Consider the following 712-residue polypeptide: Translation initiation factor eIF2B subunit epsilon (712 aa).

The tract at residues 1-20 (MAGKKGQKKSGLGNHGKNSD) is disordered. Residues Ser478, Ser481, Ser507, Ser525, Ser538, and Ser707 each carry the phosphoserine modification. A W2 domain is found at 539-710 (EFEDEDFEKE…QNADEESSSE (172 aa)).

Belongs to the eIF-2B gamma/epsilon subunits family. As to quaternary structure, component of the translation initiation factor 2B (eIF2B) complex which is a heterodecamer of two sets of five different subunits: alpha, beta, gamma, delta and epsilon. Subunits alpha, beta and delta comprise a regulatory subcomplex and subunits epsilon and gamma comprise a catalytic subcomplex. Within the complex, the hexameric regulatory complex resides at the center, with the two heterodimeric catalytic subcomplexes bound on opposite sides.

The protein resides in the cytoplasm. It localises to the cytosol. Acts as a catalytic component of the translation initiation factor 2B (eIF2B) complex, which catalyzes the exchange of GDP for GTP on eukaryotic initiation factor 2 (eIF2) and is regulated by phosphorylated eIF2. Its guanine nucleotide exchange factor activity is repressed when bound to eIF2 complex phosphorylated on the alpha subunit, thereby limiting the amount of methionyl-initiator methionine tRNA available to the ribosome and consequently global translation is repressed. It activates the synthesis of GCN4 in yeast under amino acid starvation conditions by suppressing the inhibitory effects of multiple AUG codons present in the leader of GCN4 mRNA. It may promote either repression or activation of GCN4 expression depending on amino acid availability. GCD6 and GCD7 repress GCN4 expression at the translational level by ensuring that ribosomes which have translated UORF1 will reinitiate at UORF2, -3, or -4 and thus fail to reach the GCN4 start site. This Saccharomyces cerevisiae (strain ATCC 204508 / S288c) (Baker's yeast) protein is Translation initiation factor eIF2B subunit epsilon (GCD6).